A 162-amino-acid polypeptide reads, in one-letter code: Ribosome-binding factor A (162 aa).

Residues 121 to 162 form a disordered region; that stretch reads DEVARVAAGASPAGDPDPYKEPRAEDADDAEVDEPSGSRQAD. Residues 125–136 show a composition bias toward low complexity; it reads RVAAGASPAGDP.

It belongs to the RbfA family. In terms of assembly, monomer. Binds 30S ribosomal subunits, but not 50S ribosomal subunits or 70S ribosomes.

The protein localises to the cytoplasm. Its function is as follows. One of several proteins that assist in the late maturation steps of the functional core of the 30S ribosomal subunit. Associates with free 30S ribosomal subunits (but not with 30S subunits that are part of 70S ribosomes or polysomes). Required for efficient processing of 16S rRNA. May interact with the 5'-terminal helix region of 16S rRNA. The protein is Ribosome-binding factor A of Rhodococcus jostii (strain RHA1).